Consider the following 220-residue polypeptide: Urease accessory protein UreF (220 aa).

The protein belongs to the UreF family. In terms of assembly, ureD, UreF and UreG form a complex that acts as a GTP-hydrolysis-dependent molecular chaperone, activating the urease apoprotein by helping to assemble the nickel containing metallocenter of UreC. The UreE protein probably delivers the nickel.

Its subcellular location is the cytoplasm. Its function is as follows. Required for maturation of urease via the functional incorporation of the urease nickel metallocenter. The chain is Urease accessory protein UreF from Jannaschia sp. (strain CCS1).